A 190-amino-acid polypeptide reads, in one-letter code: Hypoxanthine/guanine phosphoribosyltransferase (190 aa).

This sequence belongs to the purine/pyrimidine phosphoribosyltransferase family. Archaeal HPRT subfamily. In terms of assembly, homodimer.

The protein localises to the cytoplasm. The enzyme catalyses IMP + diphosphate = hypoxanthine + 5-phospho-alpha-D-ribose 1-diphosphate. It carries out the reaction GMP + diphosphate = guanine + 5-phospho-alpha-D-ribose 1-diphosphate. It functions in the pathway purine metabolism; IMP biosynthesis via salvage pathway; IMP from hypoxanthine: step 1/1. Its function is as follows. Catalyzes a salvage reaction resulting in the formation of IMP that is energically less costly than de novo synthesis. The protein is Hypoxanthine/guanine phosphoribosyltransferase of Methanothrix thermoacetophila (strain DSM 6194 / JCM 14653 / NBRC 101360 / PT) (Methanosaeta thermophila).